We begin with the raw amino-acid sequence, 135 residues long: HTH-type transcriptional regulator DicA (135 aa).

Positions 12–66 (IRYRRKNLKHTQRSLAKALKISHVSVSQWERGDSEPTGKNLFALSKVLQCSPTWI) constitute an HTH cro/C1-type domain. A DNA-binding region (H-T-H motif) is located at residues 23–42 (QRSLAKALKISHVSVSQWER).

Its function is as follows. This protein is a repressor of division inhibition gene dicB. This Escherichia coli (strain K12) protein is HTH-type transcriptional regulator DicA (dicA).